We begin with the raw amino-acid sequence, 183 residues long: PLAT domain-containing protein 2 (183 aa).

An N-terminal signal peptide occupies residues 1–25 (MMPRRDVLFLSLLLVIATVSAVALA). The PLAT domain maps to 31-158 (CVYTFFLRTG…SPYELSAVRN (128 aa)).

It localises to the endoplasmic reticulum. Functionally, involved in response to abiotic stress. This is PLAT domain-containing protein 2 from Arabidopsis thaliana (Mouse-ear cress).